The following is a 412-amino-acid chain: Nucleoside transporter 1 (412 aa).

The segment at 1–21 is disordered; the sequence is MSKIKESSSGILGASNNTNKE. The Cytoplasmic portion of the chain corresponds to 1 to 29; that stretch reads MSKIKESSSGILGASNNTNKESSQKSARS. Residues 7 to 21 are compositionally biased toward polar residues; that stretch reads SSSGILGASNNTNKE. A helical transmembrane segment spans residues 30 to 50; sequence IALPMTYALIGVSCLNVWNSA. Topologically, residues 51 to 56 are extracellular; sequence LGLNIK. A helical transmembrane segment spans residues 57 to 77; sequence ITYNIFQMAGLLTSSVLALFV. The Cytoplasmic portion of the chain corresponds to 78–81; sequence NYPR. A helical membrane pass occupies residues 82-102; that stretch reads VLLPTSLGVLTLLCAGFQIAH. The Extracellular portion of the chain corresponds to 103 to 114; the sequence is QTFSDSAFDTYC. Residues 115 to 135 traverse the membrane as a helical segment; that stretch reads LAAFITIGLMAGIAQTIAFAI. Over 136-144 the chain is Cytoplasmic; it reads GTTKESNMS. A helical transmembrane segment spans residues 145–165; it reads GYISAGIGMSGVLIFCINLIL. The Extracellular segment spans residues 166-181; the sequence is DYIVSDEKIYEINKSK. The helical transmembrane segment at 182-202 threads the bilayer; that stretch reads LLCLFSISEIFLIITIVCCVL. Topologically, residues 203 to 240 are cytoplasmic; it reads YIDLFPKNDNNKDSTDIEKAEEKEGRLPLIEIIKDGYK. The chain crosses the membrane as a helical span at residues 241-261; the sequence is AILSIFLVNWLSLQLFPGIGH. The Extracellular portion of the chain corresponds to 262-271; the sequence is KKWQEKHGMT. Residues 272 to 294 form a helical membrane-spanning segment; the sequence is DNNVTIIVGMFQVFDFISRYPPN. Residues 295–310 lie on the Cytoplasmic side of the membrane; sequence FTHIKIFKYFTFSLNT. Residues 311–331 form a helical membrane-spanning segment; that stretch reads LLIGNFLRLLFIPWFVLNAVI. Residues 332–343 are Extracellular-facing; it reads SSSFFTNIVQQC. A helical transmembrane segment spans residues 344 to 364; it reads VCIAALAFTNGWFNTVPFIVF. Residues 365 to 382 lie on the Cytoplasmic side of the membrane; the sequence is VKELKKVKHQKDIETISR. A helical membrane pass occupies residues 383 to 403; sequence IMVVSLFFGLFFGMLTTCLYD. At 404-412 the chain is on the extracellular side; sequence YFPIGILNN.

It belongs to the SLC29A/ENT transporter (TC 2.A.57) family.

The protein resides in the cell membrane. It catalyses the reaction inosine(in) = inosine(out). The catalysed reaction is adenosine(in) = adenosine(out). It carries out the reaction hypoxanthine(out) = hypoxanthine(in). The enzyme catalyses guanosine(in) = guanosine(out). It catalyses the reaction guanine(out) = guanine(in). The catalysed reaction is thymidine(in) = thymidine(out). It carries out the reaction uridine(out) = uridine(in). The enzyme catalyses uracil(in) = uracil(out). It catalyses the reaction thymine(out) = thymine(in). The catalysed reaction is adenine(out) = adenine(in). It carries out the reaction cytosine(out) = cytosine(in). The enzyme catalyses xanthine(out) = xanthine(in). Nucleoside and nucleobase transporter with a broad substrate specificity. The protein is Nucleoside transporter 1 of Plasmodium berghei (strain Anka).